The sequence spans 431 residues: Protein CLT2, chloroplastic (431 aa).

The transit peptide at 1 to 79 (MDTVLMATTP…PMRRPRFSVG (79 aa)) directs the protein to the chloroplast. Helical transmembrane passes span 99–119 (VVIVALAVANRVLYKLALVPM), 122–142 (YPFFMAQLTTFGYVLIYFTIL), 163–183 (FAIIGFLEALGVATGMAAAAM), 188–208 (VIPILNQTYLVWQLLFALLIL), 212–232 (FLLNQIAGCLLVAVGVVVAVS), 244–264 (IGFLWPAVLVASAAFQAGASI), 284–304 (IFVVNSFGSGFQALFVFLLLP), 343–363 (ILPLLYISTNLAFNISLLHLV), 365–385 (ISSAIVSSLTMMLSVPLAVYI), and 403–423 (FTMGCIVLVLGLLLYNIPTTP).

Belongs to the CRT-like transporter family.

It is found in the plastid. The protein resides in the chloroplast membrane. Functionally, involved in thiol transport from the plastid to the cytosol. Transports probably both glutathione (GSH) and its precursor, gamma-glutamylcysteine (gamma-EC). The chain is Protein CLT2, chloroplastic from Arabidopsis thaliana (Mouse-ear cress).